Consider the following 63-residue polypeptide: SERF-like protein C1705.02 (63 aa).

Basic and acidic residues predominate over residues 1 to 13 (MSRGNQRDVDRAR). A disordered region spans residues 1–63 (MSRGNQRDVD…EANGGSKGKK (63 aa)). Residues 14–24 (NLKKSQASKKK) are compositionally biased toward basic residues. Residues 25–35 (QAGDPTKRLEA) show a composition bias toward basic and acidic residues.

It belongs to the SERF family.

It is found in the cytoplasm. The protein resides in the nucleus. It localises to the nucleolus. The protein is SERF-like protein C1705.02 of Schizosaccharomyces pombe (strain 972 / ATCC 24843) (Fission yeast).